A 281-amino-acid chain; its full sequence is Bis(5'-nucleosyl)-tetraphosphatase, symmetrical (281 aa).

This sequence belongs to the Ap4A hydrolase family.

The catalysed reaction is P(1),P(4)-bis(5'-adenosyl) tetraphosphate + H2O = 2 ADP + 2 H(+). Its function is as follows. Hydrolyzes diadenosine 5',5'''-P1,P4-tetraphosphate to yield ADP. The protein is Bis(5'-nucleosyl)-tetraphosphatase, symmetrical of Acidovorax sp. (strain JS42).